Consider the following 130-residue polypeptide: Fluoride-specific ion channel FluC (130 aa).

A run of 4 helical transmembrane segments spans residues 10–30, 41–61, 72–89, and 105–125; these read FAVA…SLWF, GTLI…TVAM, LLFG…STYE, and LVYW…GILL. Positions 80 and 83 each coordinate Na(+).

The protein belongs to the fluoride channel Fluc/FEX (TC 1.A.43) family.

The protein localises to the cell inner membrane. It catalyses the reaction fluoride(in) = fluoride(out). Its activity is regulated as follows. Na(+) is not transported, but it plays an essential structural role and its presence is essential for fluoride channel function. In terms of biological role, fluoride-specific ion channel. Important for reducing fluoride concentration in the cell, thus reducing its toxicity. The sequence is that of Fluoride-specific ion channel FluC from Synechococcus sp. (strain JA-2-3B'a(2-13)) (Cyanobacteria bacterium Yellowstone B-Prime).